Reading from the N-terminus, the 1020-residue chain is Sodium/potassium-transporting ATPase subunit alpha-2 (1020 aa).

Positions 1 to 5 (MGRGA) are excised as a propeptide. Residues 1–31 (MGRGAGREYSPAATTAENGGGKKKQKEKELD) form a disordered region. Topologically, residues 6-85 (GREYSPAATT…NALTPPPTTP (80 aa)) are cytoplasmic. Residue Ser-10 is modified to Phosphoserine. An interaction with phosphoinositide-3 kinase region spans residues 80 to 82 (PPP). A helical membrane pass occupies residues 86–106 (EWVKFCRQLFGGFSILLWIGA). Over 107–129 (ILCFLAYGIQAAMEDEPSNDNLY) the chain is Extracellular. A helical membrane pass occupies residues 130-150 (LGVVLAAVVIVTGCFSYYQEA). The Cytoplasmic portion of the chain corresponds to 151–286 (KSSKIMDSFK…VGRTPIAMEI (136 aa)). Residues 212–227 (DNSSLTGESEPQTRSP) show a composition bias toward polar residues. The disordered stretch occupies residues 212-231 (DNSSLTGESEPQTRSPEFTH). The chain crosses the membrane as a helical span at residues 287–306 (EHFIQLITGVAVFLGVSFFV). Residues 307-318 (LSLILGYSWLEA) lie on the Extracellular side of the membrane. A helical transmembrane segment spans residues 319–336 (VIFLIGIIVANVPEGLLA). Topologically, residues 337-769 (TVTVCLTLTA…EEGRLIFDNL (433 aa)) are cytoplasmic. The 4-aspartylphosphate intermediate role is filled by Asp-374. Residues Ser-439, Ser-450, and Ser-559 each carry the phosphoserine modification. At Thr-570 the chain carries Phosphothreonine. Phosphoserine is present on residues Ser-587 and Ser-672. Residues Asp-714 and Asp-718 each coordinate Mg(2+). Residues 770–789 (KKSIAYTLTSNIPEITPFLL) form a helical membrane-spanning segment. The Extracellular portion of the chain corresponds to 790–799 (FIIANIPLPL). The chain crosses the membrane as a helical span at residues 800-820 (GTVTILCIDLGTDMVPAISLA). Residues 821-840 (YEAAESDIMKRQPRNPQTDK) lie on the Cytoplasmic side of the membrane. Ser-826 carries the phosphoserine modification. The helical transmembrane segment at 841-863 (LVNERLISMAYGQIGMIQALGGF) threads the bilayer. Over 864–915 (FTYFVILAENGFLPSRLLGIRLDWDDRSMNDLEDSYGQEWTYEQRKVVEFTC) the chain is Extracellular. A helical membrane pass occupies residues 916-935 (HTAFFASIVVVQWADLIICK). Residues 936–948 (TRRNSVFQQGMKN) are Cytoplasmic-facing. Residue Ser-940 is modified to Phosphoserine; by PKA. The chain crosses the membrane as a helical span at residues 949–967 (KILIFGLLEETALAAFLSY). Residues 968 to 982 (CPGMGVALRMYPLKV) are Extracellular-facing. A helical membrane pass occupies residues 983-1003 (TWWFCAFPYSLLIFIYDEVRK). Over 1004 to 1020 (LILRRYPGGWVEKETYY) the chain is Cytoplasmic.

It belongs to the cation transport ATPase (P-type) (TC 3.A.3) family. Type IIC subfamily. The sodium/potassium-transporting ATPase is composed of a catalytic alpha subunit, an auxiliary non-catalytic beta subunit and an additional regulatory subunit. Interacts with regulatory subunit FXYD1.

The protein resides in the membrane. It is found in the cell membrane. It catalyses the reaction K(+)(out) + Na(+)(in) + ATP + H2O = K(+)(in) + Na(+)(out) + ADP + phosphate + H(+). This is the catalytic component of the active enzyme, which catalyzes the hydrolysis of ATP coupled with the exchange of sodium and potassium ions across the plasma membrane. This action creates the electrochemical gradient of sodium and potassium, providing the energy for active transport of various nutrients. This is Sodium/potassium-transporting ATPase subunit alpha-2 (ATP1A2) from Sus scrofa (Pig).